The following is a 1009-amino-acid chain: Mediator of RNA polymerase II transcription subunit 5 (1009 aa).

This sequence belongs to the Mediator complex subunit 5 family. As to quaternary structure, component of the Mediator complex.

The protein localises to the nucleus. In terms of biological role, component of the Mediator complex, a coactivator involved in the regulated transcription of nearly all RNA polymerase II-dependent genes. Mediator functions as a bridge to convey information from gene-specific regulatory proteins to the basal RNA polymerase II transcription machinery. Mediator is recruited to promoters by direct interactions with regulatory proteins and serves as a scaffold for the assembly of a functional preinitiation complex with RNA polymerase II and the general transcription factors. This Neosartorya fischeri (strain ATCC 1020 / DSM 3700 / CBS 544.65 / FGSC A1164 / JCM 1740 / NRRL 181 / WB 181) (Aspergillus fischerianus) protein is Mediator of RNA polymerase II transcription subunit 5 (nut1).